We begin with the raw amino-acid sequence, 449 residues long: Glucose-6-phosphate isomerase (449 aa).

Catalysis depends on glutamate 290, which acts as the Proton donor. Catalysis depends on residues histidine 311 and lysine 425.

Belongs to the GPI family.

The protein localises to the cytoplasm. The catalysed reaction is alpha-D-glucose 6-phosphate = beta-D-fructose 6-phosphate. Its pathway is carbohydrate biosynthesis; gluconeogenesis. The protein operates within carbohydrate degradation; glycolysis; D-glyceraldehyde 3-phosphate and glycerone phosphate from D-glucose: step 2/4. Catalyzes the reversible isomerization of glucose-6-phosphate to fructose-6-phosphate. The chain is Glucose-6-phosphate isomerase from Clostridium tetani (strain Massachusetts / E88).